We begin with the raw amino-acid sequence, 181 residues long: Major urinary protein (181 aa).

The first 19 residues, 1–19 (MKLLLLLLCLGLTLVCGHA), serve as a signal peptide directing secretion. Residue N54 is glycosylated (N-linked (GlcNAc...) asparagine). C83 and C176 are oxidised to a cystine.

It belongs to the calycin superfamily. Lipocalin family. As to expression, abundant in the urine of adult male rats but absent from that of females.

The protein localises to the cytoplasm. It localises to the cytosol. It is found in the secreted. Major urinary proteins (Mups) bind and release pheromones. They may also protect pheromones from oxidation. In this context, they play a role in the regulation of social behaviors, such as aggression, mating, pup-suckling, territory establishment and dominance. Acts as a kairomone, detected by the prey vomeronasal organ and inducing fear reactions in mice. The polypeptide is Major urinary protein (Rattus norvegicus (Rat)).